Here is a 626-residue protein sequence, read N- to C-terminus: Probable potassium transport system protein Kup 3 (626 aa).

The next 12 membrane-spanning stretches (helical) occupy residues 10 to 30, 51 to 71, 107 to 127, 141 to 161, 173 to 193, 216 to 236, 251 to 271, 293 to 313, 341 to 361, 371 to 391, 401 to 421, and 423 to 443; these read LATL…TSPL, VLGI…LKYV, VLLG…TPAI, PAFK…LFIF, FGPV…AAIV, LLGF…EALY, WLGY…ALLL, LVAL…SGAF, IYLP…VIEF, YGIA…AVAV, AMLG…ANSV, and IADG…LLTT.

The protein belongs to the HAK/KUP transporter (TC 2.A.72) family.

The protein localises to the cell inner membrane. The enzyme catalyses K(+)(in) + H(+)(in) = K(+)(out) + H(+)(out). Its function is as follows. Transport of potassium into the cell. Likely operates as a K(+):H(+) symporter. This is Probable potassium transport system protein Kup 3 from Dechloromonas aromatica (strain RCB).